Consider the following 219-residue polypeptide: tRNA (guanine-N(7)-)-methyltransferase (219 aa).

S-adenosyl-L-methionine-binding residues include glutamate 44, aspartate 69, glutamate 102, and asparagine 125. The substrate site is built by lysine 129 and aspartate 161.

This sequence belongs to the class I-like SAM-binding methyltransferase superfamily. TrmB family.

It catalyses the reaction guanosine(46) in tRNA + S-adenosyl-L-methionine = N(7)-methylguanosine(46) in tRNA + S-adenosyl-L-homocysteine. Its pathway is tRNA modification; N(7)-methylguanine-tRNA biosynthesis. Its function is as follows. Catalyzes the formation of N(7)-methylguanine at position 46 (m7G46) in tRNA. The protein is tRNA (guanine-N(7)-)-methyltransferase of Clostridium perfringens (strain SM101 / Type A).